The following is a 256-amino-acid chain: Large ribosomal subunit protein bL21c (256 aa).

The transit peptide at 1 to 55 (MASATLAFSCSSLCATLKLPQNLNPLLLNVPPLSKPFSGVVSPPSLSRLSLLPVA) directs the protein to the chloroplast.

Component of the chloroplast large ribosomal subunit (LSU). Mature 70S chloroplast ribosomes of higher plants consist of a small (30S) and a large (50S) subunit. The 30S small subunit contains 1 molecule of ribosomal RNA (16S rRNA) and 24 different proteins. The 50S large subunit contains 3 rRNA molecules (23S, 5S and 4.5S rRNA) and 33 different proteins.

Its subcellular location is the plastid. It is found in the chloroplast. Component of the chloroplast ribosome (chloro-ribosome), a dedicated translation machinery responsible for the synthesis of chloroplast genome-encoded proteins, including proteins of the transcription and translation machinery and components of the photosynthetic apparatus. In Spinacia oleracea (Spinach), this protein is Large ribosomal subunit protein bL21c (RPL21).